The following is a 251-amino-acid chain: Triosephosphate isomerase (251 aa).

9-11 is a binding site for substrate; the sequence is NWK. Catalysis depends on His96, which acts as the Electrophile. Residue Glu167 is the Proton acceptor of the active site. Residues Gly173, Ser213, and 234–235 each bind substrate; that span reads GG.

It belongs to the triosephosphate isomerase family. Homodimer.

Its subcellular location is the cytoplasm. It catalyses the reaction D-glyceraldehyde 3-phosphate = dihydroxyacetone phosphate. Its pathway is carbohydrate biosynthesis; gluconeogenesis. The protein operates within carbohydrate degradation; glycolysis; D-glyceraldehyde 3-phosphate from glycerone phosphate: step 1/1. Its function is as follows. Involved in the gluconeogenesis. Catalyzes stereospecifically the conversion of dihydroxyacetone phosphate (DHAP) to D-glyceraldehyde-3-phosphate (G3P). This chain is Triosephosphate isomerase, found in Phocaeicola vulgatus (strain ATCC 8482 / DSM 1447 / JCM 5826 / CCUG 4940 / NBRC 14291 / NCTC 11154) (Bacteroides vulgatus).